A 194-amino-acid polypeptide reads, in one-letter code: Orotate phosphoribosyltransferase (194 aa).

117 to 125 provides a ligand contact to 5-phospho-alpha-D-ribose 1-diphosphate; sequence EDVVTTGLS. Positions 121 and 149 each coordinate orotate.

The protein belongs to the purine/pyrimidine phosphoribosyltransferase family. PyrE subfamily. As to quaternary structure, homodimer. Requires Mg(2+) as cofactor.

It carries out the reaction orotidine 5'-phosphate + diphosphate = orotate + 5-phospho-alpha-D-ribose 1-diphosphate. It participates in pyrimidine metabolism; UMP biosynthesis via de novo pathway; UMP from orotate: step 1/2. In terms of biological role, catalyzes the transfer of a ribosyl phosphate group from 5-phosphoribose 1-diphosphate to orotate, leading to the formation of orotidine monophosphate (OMP). The chain is Orotate phosphoribosyltransferase from Novosphingobium aromaticivorans (strain ATCC 700278 / DSM 12444 / CCUG 56034 / CIP 105152 / NBRC 16084 / F199).